The sequence spans 356 residues: Hyaluronan and proteoglycan link protein 1 (356 aa).

Residues 1 to 9 constitute a propeptide that is removed on maturation; it reads MRSLLLLVL. The 115-residue stretch at 40 to 154 folds into the Ig-like V-type domain; sequence PRLLVEAEQA…EGLEDDTAVV (115 aa). N58 carries an N-linked (GlcNAc...) asparagine glycan. Cystine bridges form between C63-C141, C183-C254, C207-C228, C281-C351, and C306-C327. Link domains lie at 161 to 256 and 261 to 353; these read VVFP…FCFT and GRFY…YCFR.

It belongs to the HAPLN family. In terms of tissue distribution, ubiquitously expressed.

The protein resides in the secreted. The protein localises to the extracellular space. It is found in the extracellular matrix. Stabilizes the aggregates of proteoglycan monomers with hyaluronic acid in the extracellular cartilage matrix. This Mus musculus (Mouse) protein is Hyaluronan and proteoglycan link protein 1 (Hapln1).